Here is a 210-residue protein sequence, read N- to C-terminus: Outer-membrane lipoprotein LolB (210 aa).

Residues 1–29 (MSLISNNEERSLRVRYCIAIALSALLISG) form the signal peptide. C30 carries the N-palmitoyl cysteine lipid modification. Residue C30 is the site of S-diacylglycerol cysteine attachment.

This sequence belongs to the LolB family. Monomer.

Its subcellular location is the cell outer membrane. Its function is as follows. Plays a critical role in the incorporation of lipoproteins in the outer membrane after they are released by the LolA protein. This chain is Outer-membrane lipoprotein LolB, found in Coxiella burnetii (strain RSA 493 / Nine Mile phase I).